A 290-amino-acid chain; its full sequence is Lipoyl synthase (290 aa).

The [4Fe-4S] cluster site is built by cysteine 44, cysteine 49, cysteine 55, cysteine 70, cysteine 74, cysteine 77, and serine 281. The region spanning 56–270 is the Radical SAM core domain; sequence WRCGTATFMI…KQIGLEKGFS (215 aa).

The protein belongs to the radical SAM superfamily. Lipoyl synthase family. Requires [4Fe-4S] cluster as cofactor.

It localises to the cytoplasm. The catalysed reaction is [[Fe-S] cluster scaffold protein carrying a second [4Fe-4S](2+) cluster] + N(6)-octanoyl-L-lysyl-[protein] + 2 oxidized [2Fe-2S]-[ferredoxin] + 2 S-adenosyl-L-methionine + 4 H(+) = [[Fe-S] cluster scaffold protein] + N(6)-[(R)-dihydrolipoyl]-L-lysyl-[protein] + 4 Fe(3+) + 2 hydrogen sulfide + 2 5'-deoxyadenosine + 2 L-methionine + 2 reduced [2Fe-2S]-[ferredoxin]. It functions in the pathway protein modification; protein lipoylation via endogenous pathway; protein N(6)-(lipoyl)lysine from octanoyl-[acyl-carrier-protein]: step 2/2. Its function is as follows. Catalyzes the radical-mediated insertion of two sulfur atoms into the C-6 and C-8 positions of the octanoyl moiety bound to the lipoyl domains of lipoate-dependent enzymes, thereby converting the octanoylated domains into lipoylated derivatives. This chain is Lipoyl synthase, found in Treponema denticola (strain ATCC 35405 / DSM 14222 / CIP 103919 / JCM 8153 / KCTC 15104).